A 442-amino-acid polypeptide reads, in one-letter code: Putative helicase 161L (442 aa).

Positions 88-241 (IDILEKNHSV…LFPIFFGKEK (154 aa)) constitute a Helicase ATP-binding domain. 101-108 (CFTGFGKT) is a binding site for ATP. The DEAH box motif lies at 194–197 (DEVH).

The protein belongs to the DEAD box helicase family. DEAH subfamily.

This chain is Putative helicase 161L, found in Invertebrate iridescent virus 6 (IIV-6).